Reading from the N-terminus, the 353-residue chain is UPF0283 membrane protein YcjF (353 aa).

The span at 1 to 19 shows a compositional bias: basic and acidic residues; sequence MSEPLKPRIDFAEPLKEES. The disordered stretch occupies residues 1–29; that stretch reads MSEPLKPRIDFAEPLKEESTSTFKAQQTF. A compositionally biased stretch (polar residues) spans 20–29; sequence TSTFKAQQTF. A run of 3 helical transmembrane segments spans residues 70-90, 100-120, and 213-233; these read MVLGGLALFGASVVGQGIQWT, AALGGCAAGALIIGAGVGSVI, and ESTLMIAVSPLALVDMAFIAW.

The protein belongs to the UPF0283 family.

Its subcellular location is the cell inner membrane. This is UPF0283 membrane protein YcjF from Salmonella arizonae (strain ATCC BAA-731 / CDC346-86 / RSK2980).